We begin with the raw amino-acid sequence, 381 residues long: Chymosin (381 aa).

A signal peptide spans 1–16 (MRCLVVLLAVFALSQG). The propeptide at 17–58 (AEITRIPLYKGKPLRKALKERGLLEDFLQKQQYGVSSEYSGF) is activation peptide. The Peptidase A1 domain maps to 74 to 378 (YFGKIYLGTP…DRANNLVGLA (305 aa)). Aspartate 92 is an active-site residue. Intrachain disulfides connect cysteine 105–cysteine 110 and cysteine 265–cysteine 269. The active site involves aspartate 274. A disulfide bridge connects residues cysteine 308 and cysteine 341.

This sequence belongs to the peptidase A1 family. In terms of assembly, monomer.

It catalyses the reaction Broad specificity similar to that of pepsin A. Clots milk by cleavage of a single 104-Ser-Phe-|-Met-Ala-107 bond in kappa-chain of casein.. In terms of biological role, chymosin is synthesized in the mucosa of the stomach. The enzyme hydrolyzes casein to paracasein. The polypeptide is Chymosin (CYM) (Ovis aries (Sheep)).